A 468-amino-acid chain; its full sequence is Tissue alpha-L-fucosidase (468 aa).

Residues 1 to 29 (MRAPGERWRPAGAALWLLLLLLLLGATES) form the signal peptide. A Phosphothreonine modification is found at threonine 172. Asparagine 243, asparagine 270, and asparagine 384 each carry an N-linked (GlcNAc...) asparagine glycan.

This sequence belongs to the glycosyl hydrolase 29 family. In terms of assembly, homotetramer.

It localises to the lysosome. The enzyme catalyses an alpha-L-fucoside + H2O = L-fucose + an alcohol. It carries out the reaction a neolactoside IV(2)-alpha-Fuc-nLc4Cer(d18:1(4E)) + H2O = a neolactoside nLc4Cer(d18:1(4E)) + L-fucose. It catalyses the reaction a neolactoside IV(2)-alpha-Fuc-nLc4Cer(d18:0) + H2O = a neolactoside nLc4Cer(d18:0) + L-fucose. Functionally, alpha-L-fucosidase is responsible for hydrolyzing the alpha-1,6-linked fucose joined to the reducing-end N-acetylglucosamine of the carbohydrate moieties of glycoproteins. The polypeptide is Tissue alpha-L-fucosidase (FUCA1) (Macaca fascicularis (Crab-eating macaque)).